The sequence spans 146 residues: General odorant-binding protein 19a (146 aa).

The first 22 residues, 1 to 22 (MKFHLLLVCVAISLGPIPQSEA), serve as a signal peptide directing secretion. Disulfide bonds link cysteine 40/cysteine 72, cysteine 68/cysteine 126, and cysteine 113/cysteine 135.

It belongs to the PBP/GOBP family. As to expression, expressed in adult olfactory system. Expressed exclusively in a subset of chemosensory sensilla on the third antennal segment.

Its subcellular location is the secreted. Its function is as follows. Present in the aqueous fluid surrounding olfactory sensory dendrites and are thought to aid in the capture and transport of hydrophobic odorants into and through this fluid. The sequence is that of General odorant-binding protein 19a (Obp19a) from Drosophila melanogaster (Fruit fly).